The chain runs to 523 residues: NEDD8-activating enzyme E1 regulatory subunit AXL (523 aa).

This sequence belongs to the ubiquitin-activating E1 family. ULA1 subfamily. Heterodimer of ECR1 and AXL1. The complex binds to RUB1/NEDD8 and RCE1.

It is found in the nucleus. It functions in the pathway protein modification; protein neddylation. Its function is as follows. Regulatory subunit of the dimeric ECR1-AXL1 E1 enzyme. E1 activates RUB1/NEDD8 by first adenylating its C-terminal glycine residue with ATP, thereafter linking this residue to the side chain of the catalytic cysteine, yielding a RUB1-ECR1 thioester and free AMP. E1 finally transfers RUB1 to the catalytic cysteine of RCE1. May function redundantly with AXR1 in the RUB conjugating pathway. Seems not to be functionally equivalent to AXR1 in vivo. This Arabidopsis thaliana (Mouse-ear cress) protein is NEDD8-activating enzyme E1 regulatory subunit AXL.